The primary structure comprises 509 residues: MNESEIPIDIHTLKLQDWLISRRIVPKNVQQELREIHRKISNALQDMPSNEQLIKLLARTNINYYHVKEIIEILKQTEKDTKSVFGTYGSQRMKDWQEISRLYEKNATYLAETAQIFVRNVNYEIPGVRKQMARLEQQADETQKRAHDLNKPESQILADHSALLEQLGVKGDNLHAEFVQVLSGLPELYDKSLVGIANIQPGIDLYAEVSGNKQVLPILNHLVEFGNTTVYQYIHKEAPLAVEEPPIRLNLSEGNASKDDNAVAEIDFGTDDNGGTSSTVSAEIIDYGDFGSGDLPESDGGNIDWGIESAPTDAVEINFDIPVEEYGIVVEGTGMDGGTAKGDQAYTLLDSPNYRDRFLDEIYELESFLRMRIYELKQLESSSDIMFSLMDNIATHDGESIWKILVSVEKIIQQTSDKQTQHLFQLKHSPKYANMLATKLQQMTKAVEKLRATREALKQLTIELREQRQDLNPVLEELIAQTRTLQSHIEKDISKRYKNRVVNLMGGVN.

Belongs to the CDK5RAP3 family.

Its subcellular location is the nucleus. It is found in the cytoplasm. Substrate adapter of E3 ligase complexes mediating ufmylation, the covalent attachment of the ubiquitin-like modifier UFM1 to substrate proteins, and which is involved in various processes, such as ribosome recycling and reticulophagy (also called ER-phagy). In Drosophila melanogaster (Fruit fly), this protein is CDK5RAP3 protein homolog.